The primary structure comprises 750 residues: Photosystem I P700 chlorophyll a apoprotein A1 (750 aa).

The next 8 helical transmembrane spans lie at 70–93, 156–179, 195–219, 291–309, 346–369, 385–411, 433–455, and 531–549; these read VFSAHFGQLSIIFLWLSGMYFHGA, LYCTAIGALVFAALMLFAGWFHYH, LNHHLAGLLGLGSLSWAGHQVHVSL, IAHHHLAIAILFLVAGHMY, WHAQLSLNLAMLGSLTIVVAHHMY, LSLFTHHMWIGGFLIVGAAAHAAIFMV, AIISHLNWVCIFLGFHSFGLYIH, and FLVHHIHAFTIHVTVLILL. Residues Cys-573 and Cys-582 each coordinate [4Fe-4S] cluster. Transmembrane regions (helical) follow at residues 589–610 and 664–686; these read HVFLGLFWMYNSISVVIFHFSW and LSAYGLFFLGAHFVWAFSLMFLF. A chlorophyll a'-binding site is contributed by His-675. Chlorophyll a contacts are provided by Met-683 and Tyr-691. A phylloquinone-binding site is contributed by Trp-692. Residues 724–744 form a helical membrane-spanning segment; it reads AVGVTHYLLGGIATTWAFFLA.

It belongs to the PsaA/PsaB family. As to quaternary structure, the PsaA/B heterodimer binds the P700 chlorophyll special pair and subsequent electron acceptors. PSI consists of a core antenna complex that captures photons, and an electron transfer chain that converts photonic excitation into a charge separation. The eukaryotic PSI reaction center is composed of at least 11 subunits. P700 is a chlorophyll a/chlorophyll a' dimer, A0 is one or more chlorophyll a, A1 is one or both phylloquinones and FX is a shared 4Fe-4S iron-sulfur center. serves as cofactor.

It is found in the plastid. It localises to the chloroplast thylakoid membrane. It catalyses the reaction reduced [plastocyanin] + hnu + oxidized [2Fe-2S]-[ferredoxin] = oxidized [plastocyanin] + reduced [2Fe-2S]-[ferredoxin]. Its function is as follows. PsaA and PsaB bind P700, the primary electron donor of photosystem I (PSI), as well as the electron acceptors A0, A1 and FX. PSI is a plastocyanin-ferredoxin oxidoreductase, converting photonic excitation into a charge separation, which transfers an electron from the donor P700 chlorophyll pair to the spectroscopically characterized acceptors A0, A1, FX, FA and FB in turn. Oxidized P700 is reduced on the lumenal side of the thylakoid membrane by plastocyanin. This chain is Photosystem I P700 chlorophyll a apoprotein A1, found in Morus indica (Mulberry).